Here is a 190-residue protein sequence, read N- to C-terminus: Nucleoside triphosphate pyrophosphatase (190 aa).

Asp-69 functions as the Proton acceptor in the catalytic mechanism.

Belongs to the Maf family. A divalent metal cation serves as cofactor.

It localises to the cytoplasm. The catalysed reaction is a ribonucleoside 5'-triphosphate + H2O = a ribonucleoside 5'-phosphate + diphosphate + H(+). It carries out the reaction a 2'-deoxyribonucleoside 5'-triphosphate + H2O = a 2'-deoxyribonucleoside 5'-phosphate + diphosphate + H(+). Functionally, nucleoside triphosphate pyrophosphatase. May have a dual role in cell division arrest and in preventing the incorporation of modified nucleotides into cellular nucleic acids. This Helicobacter pylori (strain J99 / ATCC 700824) (Campylobacter pylori J99) protein is Nucleoside triphosphate pyrophosphatase.